The primary structure comprises 538 residues: Lipid scramblase CLPTM1L (538 aa).

The Cytoplasmic segment spans residues 1–10 (MWSGRSSFTS). A helical transmembrane segment spans residues 11–31 (LVVGVFVVYVVHTCWVMYGIV). Topologically, residues 32–284 (YTRPCSGDAN…VKGIFVDTNL (253 aa)) are extracellular. N-linked (GlcNAc...) asparagine glycosylation is found at Asn91, Asn101, and Asn229. The chain crosses the membrane as a helical span at residues 285-305 (YFLALTFFVAAFHLLFDFLAF). Over 306-324 (KNDISFWKKKKSMIGMSTK) the chain is Cytoplasmic. Residues 325 to 342 (AVLWRCFSTVVIFLFLLD) traverse the membrane as a helical segment. Over 343 to 346 (EQTS) the chain is Extracellular. The helical transmembrane segment at 347 to 364 (LLVLVPAGVGAAIELWKV) threads the bilayer. Over 365-402 (KKALKMTIFWRGLMPEFQFGTYSESERKTEEYDTQAMK) the chain is Cytoplasmic. Residues 403 to 423 (YLSYLLYPLCVGGAVYSLLNI) form a helical membrane-spanning segment. Topologically, residues 424–428 (KYKSW) are extracellular. The chain crosses the membrane as a helical span at residues 429-449 (YSWLINSFVNGVYAFGFLFML). Over 450 to 538 (PQLFVNYKLK…EKATRAPHTD (89 aa)) the chain is Cytoplasmic.

This sequence belongs to the CLPTM1 family. In terms of tissue distribution, ubiquitously expressed.

It is found in the endoplasmic reticulum membrane. It catalyses the reaction a 6-(alpha-D-glucosaminyl)-1-(1,2-diacyl-sn-glycero-3-phospho)-1D-myo-inositol(in) = a 6-(alpha-D-glucosaminyl)-1-(1,2-diacyl-sn-glycero-3-phospho)-1D-myo-inositol(out). The enzyme catalyses 6-(alpha-D-glucosaminyl)-(1-octadecanoyl,2-(9Z)-octadecenoyl-sn-glycero-3-phospho)-1D-myo-inositol(in) = 6-(alpha-D-glucosaminyl)-(1-octadecanoyl,2-(9Z)-octadecenoyl-sn-glycero-3-phospho)-1D-myo-inositol(out). The catalysed reaction is a 1,2-diacyl-sn-glycero-3-phospho-(1D-myo-inositol)(in) = a 1,2-diacyl-sn-glycero-3-phospho-(1D-myo-inositol)(out). It carries out the reaction a 1,2-diacyl-sn-glycero-3-phosphocholine(in) = a 1,2-diacyl-sn-glycero-3-phosphocholine(out). It catalyses the reaction a 1,2-diacyl-sn-glycero-3-phosphoethanolamine(in) = a 1,2-diacyl-sn-glycero-3-phosphoethanolamine(out). In terms of biological role, scramblase that mediates the translocation of glucosaminylphosphatidylinositol (alpha-D-GlcN-(1-6)-(1,2-diacyl-sn-glycero-3-phospho)-1D-myo-inositol, GlcN-PI) across the endoplasmic reticulum (ER) membrane, from the cytosolic leaflet to the luminal leaflet of the ER membrane, where it participates in the biosynthesis of glycosylphosphatidylinositol (GPI). GPI is a lipid glycoconjugate involved in post-translational modification of proteins. Can also translocate 1,2-diacyl-sn-glycero-3-phospho-(1D-myo-inositol) (phosphatidylinositol or PI), as well as several other phospholipids (1,2-diacyl-sn-glycero-3-phosphocholine, 1,2-diacyl-sn-glycero-3-phosphoethanolamine), and N-acetylglucosaminylphosphatidylinositol (GlcNAc-PI) in vitro. The chain is Lipid scramblase CLPTM1L (CLPTM1L) from Homo sapiens (Human).